Here is a 202-residue protein sequence, read N- to C-terminus: MNLEQIYKDCGAYLEGHFLLSSGKHSQFYLQSAKVLEDPKLAAKLCNELAKIIASYKIEFDSICSPALGGILAGYELARACSKRFIFTERVNKEMTLRRGFEVKKGEKFIICEDIITTGGSALESAKIIESLGGIVVGFAALANRGFCAVENLKSPRKDNAKLPENLPLFTLGNFEFEIYDETNCPLCKKGSKAIKPGSRGN.

Residues K93 and 113 to 121 contribute to the 5-phospho-alpha-D-ribose 1-diphosphate site; that span reads EDIITTGGS. Positions 117 and 145 each coordinate orotate.

This sequence belongs to the purine/pyrimidine phosphoribosyltransferase family. PyrE subfamily. In terms of assembly, homodimer. Requires Mg(2+) as cofactor.

It catalyses the reaction orotidine 5'-phosphate + diphosphate = orotate + 5-phospho-alpha-D-ribose 1-diphosphate. The protein operates within pyrimidine metabolism; UMP biosynthesis via de novo pathway; UMP from orotate: step 1/2. Its function is as follows. Catalyzes the transfer of a ribosyl phosphate group from 5-phosphoribose 1-diphosphate to orotate, leading to the formation of orotidine monophosphate (OMP). The protein is Orotate phosphoribosyltransferase of Campylobacter jejuni subsp. jejuni serotype O:23/36 (strain 81-176).